Here is a 715-residue protein sequence, read N- to C-terminus: Fatty acid oxidation complex subunit alpha (715 aa).

Positions 1-190 are enoyl-CoA hydratase; it reads MTTTSAFMLN…KAGLVDDVVP (190 aa). Positions 306–715 are 3-hydroxyacyl-CoA dehydrogenase; that stretch reads GPLNSVGILG…WTNGETDQGN (410 aa).

The protein in the N-terminal section; belongs to the enoyl-CoA hydratase/isomerase family. This sequence in the central section; belongs to the 3-hydroxyacyl-CoA dehydrogenase family. As to quaternary structure, heterotetramer of two alpha chains (FadJ) and two beta chains (FadI).

The protein localises to the cytoplasm. The enzyme catalyses a (3S)-3-hydroxyacyl-CoA = a (2E)-enoyl-CoA + H2O. It carries out the reaction a 4-saturated-(3S)-3-hydroxyacyl-CoA = a (3E)-enoyl-CoA + H2O. The catalysed reaction is a (3S)-3-hydroxyacyl-CoA + NAD(+) = a 3-oxoacyl-CoA + NADH + H(+). It catalyses the reaction (3S)-3-hydroxybutanoyl-CoA = (3R)-3-hydroxybutanoyl-CoA. Its pathway is lipid metabolism; fatty acid beta-oxidation. Its function is as follows. Catalyzes the formation of a hydroxyacyl-CoA by addition of water on enoyl-CoA. Also exhibits 3-hydroxyacyl-CoA epimerase and 3-hydroxyacyl-CoA dehydrogenase activities. This Salmonella enteritidis PT4 (strain P125109) protein is Fatty acid oxidation complex subunit alpha.